Consider the following 91-residue polypeptide: Putative defective replication initiation protein (91 aa).

This is Putative defective replication initiation protein (repA1) from Escherichia coli (strain K12).